A 622-amino-acid chain; its full sequence is MAAHHRQNTAGRRKVQVSYVIRDEVEKYNRNGVNALQLDPALNRLFTAGRDSIIRIWSVNQHKQDPYIASMEHHTDWVNDIVLCCNGKTLISASSDTTVKVWNAHKGFCMSTLRTHKDYVKALAYAKDKELVASAGLDRQIFLWDVNTLTALTASNNTVTTSSLSGNKDSIYSLAMNQLGTIIVSGSTEKVLRVWDPRTCAKLMKLKGHTDNVKALLLNRDGTQCLSGSSDGTIRLWSLGQQRCIATYRVHDEGVWALQVNDAFTHVYSGGRDRKIYCTDLRNPDIRVLICEEKAPVLKMELDRSADPPPAIWVATTKSTVNKWTLKGIHNFRASGDYDNDCTNPITPLCTQPDQVIKGGASIIQCHILNDKRHILTKDTNNNVAYWVSVKDAGFSSPDGSDPKLNLGGLLLQALLEYWPRTHVNPMDEEENEVNHVNGEQENRVQKGNGYFQVPPHTPVIFGEAGGRTLFRLLCRDSGGETESMLLNETVPQWVIDITVDKNMPKFNKIPFYLQPHASSGAKTLKKDRLSASDMLQVRKVMEHVYEKIINLDNESQTTSSSNNEKPGEQEKEEDIAVLAEEKIELLCQDQVLDPNMDLRTVKHFIWKSGGDLTLHYRQKST.

At Tyr28 the chain carries Phosphotyrosine. WD repeat units follow at residues 28–67, 73–112, 115–154, 166–205, 208–247, 250–289, 292–334, and 358–397; these read YNRNGVNALQLDPALNRLFTAGRDSIIRIWSVNQHKQDPY, HHTDWVNDIVLCCNGKTLISASSDTTVKVWNAHKGFCMST, THKDYVKALAYAKDKELVASAGLDRQIFLWDVNTLTALTA, GNKDSIYSLAMNQLGTIIVSGSTEKVLRVWDPRTCAKLMK, GHTDNVKALLLNRDGTQCLSGSSDGTIRLWSLGQQRCIAT, VHDEGVWALQVNDAFTHVYSGGRDRKIYCTDLRNPDIRVL, EEKA…NFRA, and KGGASIIQCHILNDKRHILTKDTNNNVAYWVSVKDAGFSS. Lys214 carries the post-translational modification N6-acetyllysine. An N6-acetyllysine modification is found at Lys523. Positions 552–573 are disordered; that stretch reads LDNESQTTSSSNNEKPGEQEKE. The span at 554 to 565 shows a compositional bias: low complexity; it reads NESQTTSSSNNE. A Phosphothreonine modification is found at Thr558.

This sequence belongs to the WD repeat WDR48 family. In terms of assembly, interacts with USP46. Interacts with USP1. Interacts with USP12. Component of the USP12-WDR20-WDR48 deubiquitinating complex. Component of the USP12-DMWD-WDR48 deubiquitinating complex. Interacts with PHLPP1. Interacts with RAD51AP1; the interaction is direct and promotes formation of a trimeric complex with RAD51 via RAD51AP1. Interacts with ATAD5; the interaction regulates USP1-mediated PCNA deubiquitination. Interacts with RAD51; the interaction is enhanced under replication stress. Interacts with ITCH; the interaction is more efficient when both USP12 and WDR48/UAF1 are involved and may facilitate recruitment of the USP12 deubiquitinating complex to Notch.

It localises to the nucleus. The protein resides in the cytoplasm. It is found in the lysosome. The protein localises to the late endosome. Regulator of deubiquitinating complexes, which acts as a strong activator of USP1, USP12 and USP46. Enhances the USP1-mediated deubiquitination of FANCD2; USP1 being almost inactive by itself. Activates deubiquitination by increasing the catalytic turnover without increasing the affinity of deubiquitinating enzymes for the substrate. Also activates deubiquitinating activity of complexes containing USP12. Docks at the distal end of the USP12 fingers domain and induces a cascade of structural changes leading to the activation of the enzyme. Together with RAD51AP1, promotes DNA repair by stimulating RAD51-mediated homologous recombination. Binds single-stranded DNA (ssDNA) and double-stranded DNA (dsDNA). DNA-binding is required both for USP1-mediated deubiquitination of FANCD2 and stimulation of RAD51-mediated homologous recombination: both WDR48/UAF1 and RAD51AP1 have coordinated role in DNA-binding during these processes. Together with ATAD5 and by regulating USP1 activity, has a role in PCNA-mediated translesion synthesis (TLS) by deubiquitinating monoubiquitinated PCNA. Together with ATAD5, has a role in recruiting RAD51 to stalled forks during replication stress. This chain is WD repeat-containing protein 48 (WDR48), found in Macaca fascicularis (Crab-eating macaque).